Consider the following 443-residue polypeptide: Glutamate--tRNA ligase 1 (443 aa).

A 'HIGH' region motif is present at residues 10 to 20; that stretch reads PSPTGYIHVGN. Residues 241–245 carry the 'KMSKS' region motif; sequence ALSKR. K244 lines the ATP pocket.

This sequence belongs to the class-I aminoacyl-tRNA synthetase family. Glutamate--tRNA ligase type 1 subfamily. Monomer.

It localises to the cytoplasm. The enzyme catalyses tRNA(Glu) + L-glutamate + ATP = L-glutamyl-tRNA(Glu) + AMP + diphosphate. Its function is as follows. Catalyzes the attachment of glutamate to tRNA(Glu) in a two-step reaction: glutamate is first activated by ATP to form Glu-AMP and then transferred to the acceptor end of tRNA(Glu). This Ruegeria pomeroyi (strain ATCC 700808 / DSM 15171 / DSS-3) (Silicibacter pomeroyi) protein is Glutamate--tRNA ligase 1.